A 348-amino-acid polypeptide reads, in one-letter code: Probable dual-specificity RNA methyltransferase RlmN (348 aa).

E93 functions as the Proton acceptor in the catalytic mechanism. The region spanning 99–333 is the Radical SAM core domain; the sequence is TEKRLTACLS…VSLRKSRGLD (235 aa). C106 and C338 are joined by a disulfide. C113, C117, and C120 together coordinate [4Fe-4S] cluster. Residues 160–161, S190, 219–221, and N295 contribute to the S-adenosyl-L-methionine site; these read GE and SLH. C338 (S-methylcysteine intermediate) is an active-site residue.

It belongs to the radical SAM superfamily. RlmN family. The cofactor is [4Fe-4S] cluster.

It is found in the cytoplasm. The catalysed reaction is adenosine(2503) in 23S rRNA + 2 reduced [2Fe-2S]-[ferredoxin] + 2 S-adenosyl-L-methionine = 2-methyladenosine(2503) in 23S rRNA + 5'-deoxyadenosine + L-methionine + 2 oxidized [2Fe-2S]-[ferredoxin] + S-adenosyl-L-homocysteine. The enzyme catalyses adenosine(37) in tRNA + 2 reduced [2Fe-2S]-[ferredoxin] + 2 S-adenosyl-L-methionine = 2-methyladenosine(37) in tRNA + 5'-deoxyadenosine + L-methionine + 2 oxidized [2Fe-2S]-[ferredoxin] + S-adenosyl-L-homocysteine. Its function is as follows. Specifically methylates position 2 of adenine 2503 in 23S rRNA and position 2 of adenine 37 in tRNAs. In Prochlorococcus marinus (strain AS9601), this protein is Probable dual-specificity RNA methyltransferase RlmN.